Consider the following 1279-residue polypeptide: Talin-A (1279 aa).

The 282-residue stretch at 84-365 folds into the FERM domain; the sequence is RPQKFKLLDG…GYIEIIMKAR (282 aa).

Its subcellular location is the cytoplasm. The protein resides in the cytoskeleton. It localises to the cell cortex. Actin-binding protein that may be involved in the control of cell motility and chemotaxis. This Dictyostelium discoideum (Social amoeba) protein is Talin-A (talA).